A 144-amino-acid polypeptide reads, in one-letter code: Large ribosomal subunit protein uL15 (144 aa).

The segment at 1–53 (MRLNTLSPAEGAKHAPKRVGRGIGSGLGKTGGRGHKGQKSRSGGGVRRGFEGG) is disordered. Over residues 21–31 (RGIGSGLGKTG) the composition is skewed to gly residues.

Belongs to the universal ribosomal protein uL15 family. Part of the 50S ribosomal subunit.

Functionally, binds to the 23S rRNA. This is Large ribosomal subunit protein uL15 from Proteus mirabilis (strain HI4320).